Consider the following 665-residue polypeptide: Methionine--tRNA ligase (665 aa).

The 'HIGH' region signature appears at 12 to 22 (YYPSGKLHIGS). The short motif at 308-312 (KMSKS) is the 'KMSKS' region element. Lys311 is a binding site for ATP. Residues 562–665 (TFDAVEIRVA…SSVPNGSIIG (104 aa)) form the tRNA-binding domain.

This sequence belongs to the class-I aminoacyl-tRNA synthetase family. MetG type 2B subfamily. Homodimer.

The protein resides in the cytoplasm. The catalysed reaction is tRNA(Met) + L-methionine + ATP = L-methionyl-tRNA(Met) + AMP + diphosphate. Is required not only for elongation of protein synthesis but also for the initiation of all mRNA translation through initiator tRNA(fMet) aminoacylation. In Streptococcus pyogenes serotype M1, this protein is Methionine--tRNA ligase (metG).